The following is a 555-amino-acid chain: B3 domain-containing protein REM10 (555 aa).

4 DNA-binding regions (TF-B3) span residues 11–103 (NPQF…LGPS), 150–247 (CFVA…FPMT), 276–372 (SFVA…LPLN), and 460–554 (SQNR…FCSK).

Its subcellular location is the nucleus. The chain is B3 domain-containing protein REM10 (REM10) from Arabidopsis thaliana (Mouse-ear cress).